The following is a 185-amino-acid chain: ATP synthase subunit delta (185 aa).

This sequence belongs to the ATPase delta chain family. In terms of assembly, F-type ATPases have 2 components, F(1) - the catalytic core - and F(0) - the membrane proton channel. F(1) has five subunits: alpha(3), beta(3), gamma(1), delta(1), epsilon(1). CF(0) has four main subunits: a(1), b(1), b'(1) and c(10-14). The alpha and beta chains form an alternating ring which encloses part of the gamma chain. F(1) is attached to F(0) by a central stalk formed by the gamma and epsilon chains, while a peripheral stalk is formed by the delta, b and b' chains.

Its subcellular location is the cellular thylakoid membrane. F(1)F(0) ATP synthase produces ATP from ADP in the presence of a proton or sodium gradient. F-type ATPases consist of two structural domains, F(1) containing the extramembraneous catalytic core and F(0) containing the membrane proton channel, linked together by a central stalk and a peripheral stalk. During catalysis, ATP synthesis in the catalytic domain of F(1) is coupled via a rotary mechanism of the central stalk subunits to proton translocation. Its function is as follows. This protein is part of the stalk that links CF(0) to CF(1). It either transmits conformational changes from CF(0) to CF(1) or is implicated in proton conduction. The protein is ATP synthase subunit delta of Crocosphaera subtropica (strain ATCC 51142 / BH68) (Cyanothece sp. (strain ATCC 51142)).